Consider the following 869-residue polypeptide: Rho GTPase-activating protein 27 (869 aa).

Residues 6–69 (EGDVYVLVEH…PAQYVRELPA (64 aa)) enclose the SH3 domain. The tract at residues 104 to 137 (GADGSSAEPRGRASSLCGPARQRTSGQRNSLAPG) is disordered. Ser155, Ser215, and Ser249 each carry phosphoserine. WW domains are found at residues 246–280 (PRLSPVWETHTDAGTGRPYYYNPDTGVTTWESPFE) and 299–333 (ESLETEWGQYWDEESGRVFFYNPLTGETVWEDETE). 3 disordered regions span residues 275–299 (WESPFEAPEGATSPTTSRASVGSGE), 331–389 (ETEE…DLGP), and 447–474 (VPVPAPRSGRKSSQDSDTPAQASPPEEK). Acidic residues predominate over residues 331 to 343 (ETEELEDDPEEQL). Positions 345 to 356 (MQPSLSPRSPGQ) are enriched in polar residues. Ser350 carries the phosphoserine modification. The region spanning 414 to 447 (QFTQEQWVRLEDQEGKPYFYNPEDSSVQWELPQV) is the WW 3 domain. Phosphoserine is present on residues Ser459 and Ser462. Thr464 is subject to Phosphothreonine. The residue at position 469 (Ser469) is a Phosphoserine. The 117-residue stretch at 477–593 (TLDKAGVLHR…WHKAIAEGIE (117 aa)) folds into the PH domain. A disordered region spans residues 598 to 644 (DLPQREEGEPSSADFGSSERLGSWKEEDVRPNAASPSLNPGSQESDL). Residues 631 to 642 (ASPSLNPGSQES) show a composition bias toward polar residues. Ser632 is subject to Phosphoserine. A Rho-GAP domain is found at 677–866 (CALAQLCERE…LILHQCADIF (190 aa)).

In terms of assembly, interacts with SH3KBP1/CIN85.

The protein resides in the cytoplasm. It localises to the membrane. In terms of biological role, rho GTPase-activating protein which may be involved in clathrin-mediated endocytosis. GTPase activators for the Rho-type GTPases act by converting them to an inactive GDP-bound state. Has activity toward CDC42 and RAC1. The chain is Rho GTPase-activating protein 27 (Arhgap27) from Rattus norvegicus (Rat).